Consider the following 32-residue polypeptide: QSISCAESCVWIPCATSLIGCSCVNSRCIYSK.

Gln1 is subject to Pyrrolidone carboxylic acid. Cystine bridges form between Cys5/Cys21, Cys9/Cys23, and Cys14/Cys28.

Contains 3 disulfide bonds. As to expression, expressed in midvein, lamina and periphery of leaves (at protein level).

Probably participates in a plant defense mechanism. In Petunia hybrida (Petunia), this protein is Acyclotide phyb-M.